The following is a 475-amino-acid chain: Membrane-bound lytic murein transglycosylase F (475 aa).

The N-terminal stretch at 1-15 (MKKLLLILCCITLLA) is a signal peptide. The segment at 16-258 (ACQKVVVEQE…HLNEKYFAHV (243 aa)) is non-LT domain. An LT domain region spans residues 259–475 (KRFDYVDTRA…KTEAAQPQQP (217 aa)). Residue Glu303 is part of the active site.

It in the N-terminal section; belongs to the bacterial solute-binding protein 3 family. The protein in the C-terminal section; belongs to the transglycosylase Slt family.

The protein resides in the cell outer membrane. It carries out the reaction Exolytic cleavage of the (1-&gt;4)-beta-glycosidic linkage between N-acetylmuramic acid (MurNAc) and N-acetylglucosamine (GlcNAc) residues in peptidoglycan, from either the reducing or the non-reducing ends of the peptidoglycan chains, with concomitant formation of a 1,6-anhydrobond in the MurNAc residue.. In terms of biological role, murein-degrading enzyme that degrades murein glycan strands and insoluble, high-molecular weight murein sacculi, with the concomitant formation of a 1,6-anhydromuramoyl product. Lytic transglycosylases (LTs) play an integral role in the metabolism of the peptidoglycan (PG) sacculus. Their lytic action creates space within the PG sacculus to allow for its expansion as well as for the insertion of various structures such as secretion systems and flagella. The sequence is that of Membrane-bound lytic murein transglycosylase F from Shewanella halifaxensis (strain HAW-EB4).